Reading from the N-terminus, the 305-residue chain is ATP synthase subunit gamma, mitochondrial (305 aa).

Belongs to the ATPase gamma chain family. As to quaternary structure, F-type ATPases have 2 components, F(1) - the catalytic core - and F(o) - the membrane proton channel. F(1) has five subunits: alpha(3), beta(3), gamma(1), delta(1), epsilon(1), plus the additional subunit P18 (Tb427.05.1710) that is not present in F(1)F(o) ATP synthase from metazoa. Subunit P18 (Tb927.5.1710) interacts with the alpha subunit with a 1:1 stoichiometry; the interaction is direct. Subunit gamma is part of the central stalk. F(o) has three main subunits: a, b and c. The trypanosomal ATPase complex contains additional subunits that are not present in the F(1)F(o) ATP synthase from metazoa.

Its subcellular location is the mitochondrion. It is found in the mitochondrion inner membrane. Functionally, mitochondrial membrane ATP synthase (F(1)F(o) ATP synthase) produces ATP from ADP in the presence of a proton gradient across the membrane which is generated by electron transport complexes of the respiratory chain. F-type ATPases consist of two structural domains, F(1) - containing the extramembraneous catalytic core, and F(o) - containing the membrane proton channel, linked together by a central stalk and a peripheral stalk. During catalysis, ATP synthesis in the catalytic domain of F(1) is coupled via a rotary mechanism of the central stalk subunits to proton translocation. Subunits alpha and beta form the catalytic core in F(1). Rotation of the central stalk against the surrounding alpha(3)beta(3) subunits leads to hydrolysis of ATP in three separate catalytic sites on the beta subunits. Contrary to the procyclic, insect form that requires F(1)F(o) ATP synthase for ATP synthesis, the bloodstream form relies on ATP hydrolysis by F(1)F(o) ATP synthase to maintain its mitochondrial membrane potential. This chain is ATP synthase subunit gamma, mitochondrial, found in Trypanosoma brucei brucei.